The following is a 90-amino-acid chain: Probable Fe(2+)-trafficking protein (90 aa).

This sequence belongs to the Fe(2+)-trafficking protein family.

In terms of biological role, could be a mediator in iron transactions between iron acquisition and iron-requiring processes, such as synthesis and/or repair of Fe-S clusters in biosynthetic enzymes. The protein is Probable Fe(2+)-trafficking protein of Koribacter versatilis (strain Ellin345).